A 163-amino-acid polypeptide reads, in one-letter code: Epithelial membrane protein 3 (163 aa).

Residues 4-24 form a helical membrane-spanning segment; sequence LLLVVSALHILILILLFVATL. N-linked (GlcNAc...) asparagine glycosylation is found at Asn-47 and Asn-56. A run of 3 helical transmembrane segments spans residues 66–86, 100–120, and 139–159; these read VQVL…LFMF, TGLC…IYAI, and FALA…YIHL.

Belongs to the PMP-22/EMP/MP20 family.

It localises to the membrane. In terms of biological role, probably involved in cell proliferation and cell-cell interactions. This is Epithelial membrane protein 3 (EMP3) from Homo sapiens (Human).